Reading from the N-terminus, the 177-residue chain is Crossover junction endodeoxyribonuclease RuvC (177 aa).

Active-site residues include Asp-8, Glu-72, and Asp-144. Asp-8, Glu-72, and Asp-144 together coordinate Mg(2+).

This sequence belongs to the RuvC family. In terms of assembly, homodimer which binds Holliday junction (HJ) DNA. The HJ becomes 2-fold symmetrical on binding to RuvC with unstacked arms; it has a different conformation from HJ DNA in complex with RuvA. In the full resolvosome a probable DNA-RuvA(4)-RuvB(12)-RuvC(2) complex forms which resolves the HJ. Mg(2+) is required as a cofactor.

The protein localises to the cytoplasm. The enzyme catalyses Endonucleolytic cleavage at a junction such as a reciprocal single-stranded crossover between two homologous DNA duplexes (Holliday junction).. In terms of biological role, the RuvA-RuvB-RuvC complex processes Holliday junction (HJ) DNA during genetic recombination and DNA repair. Endonuclease that resolves HJ intermediates. Cleaves cruciform DNA by making single-stranded nicks across the HJ at symmetrical positions within the homologous arms, yielding a 5'-phosphate and a 3'-hydroxyl group; requires a central core of homology in the junction. The consensus cleavage sequence is 5'-(A/T)TT(C/G)-3'. Cleavage occurs on the 3'-side of the TT dinucleotide at the point of strand exchange. HJ branch migration catalyzed by RuvA-RuvB allows RuvC to scan DNA until it finds its consensus sequence, where it cleaves and resolves the cruciform DNA. In Teredinibacter turnerae (strain ATCC 39867 / T7901), this protein is Crossover junction endodeoxyribonuclease RuvC.